The primary structure comprises 319 residues: Olfactory receptor 51F1 (319 aa).

At 1–37 (MLQNQDTMEILSNSTSKFPTFLLTGIPGLESAHVWIS) the chain is on the extracellular side. Residues 38-58 (IPFCCFYAIALSGNSVILFVI) form a helical membrane-spanning segment. Residues 59–75 (ITQQSLHEPMYYFLFRL) lie on the Cytoplasmic side of the membrane. Residues 76–96 (SATDLGLTVSSLSTTLGILWF) form a helical membrane-spanning segment. Over 97 to 106 (EAREISLYSC) the chain is Extracellular. A disulfide bridge links C106 with C188. A helical transmembrane segment spans residues 107–127 (IVQMFFLHGFTFMESGVLVAT). At 128–149 (AFDRYVAICDPLRYTTILTNSR) the chain is on the cytoplasmic side. Residues 150 to 170 (IIQMGLLMITRAIVLILPLLL) traverse the membrane as a helical segment. The Extracellular portion of the chain corresponds to 171–211 (LLKPLYFCRMNALSHSYCYHPDVIQLACSDIRANSICGLID). The chain crosses the membrane as a helical span at residues 212 to 232 (LILTTGIDTPCIVLSYILIIH). Over 233–249 (SVLRIASPEEWHKVFST) the chain is Cytoplasmic. A helical transmembrane segment spans residues 250–270 (CVSHVGAVAFFYIHMLSLSLV). The Extracellular segment spans residues 271-279 (YRYGRSAPR). The helical transmembrane segment at 280–300 (VVHSVMANVYLLLPPVLNPII) threads the bilayer. Residues 301 to 319 (DSVKTKQIRKAMLSLLLTK) are Cytoplasmic-facing.

The protein belongs to the G-protein coupled receptor 1 family.

It is found in the cell membrane. In terms of biological role, odorant receptor. The polypeptide is Olfactory receptor 51F1 (OR51F1) (Homo sapiens (Human)).